Consider the following 36-residue polypeptide: Pancreatic polypeptide (36 aa).

Tyr36 carries the post-translational modification Tyrosine amide.

Belongs to the NPY family.

The protein resides in the secreted. Its function is as follows. Hormone secreted by pancreatic cells that acts as a regulator of pancreatic and gastrointestinal functions. In Anser anser anser (Western greylag goose), this protein is Pancreatic polypeptide (PPY).